The primary structure comprises 685 residues: Methionine--tRNA ligase (685 aa).

Zn(2+) contacts are provided by C142, C145, C155, and C158. A 'KMSKS' region motif is present at residues 330–334 (KMSKS). K333 is a binding site for ATP. The region spanning 584–685 (DFIKVDLRVA…SGAKPGDKVS (102 aa)) is the tRNA-binding domain.

Belongs to the class-I aminoacyl-tRNA synthetase family. MetG type 1 subfamily. In terms of assembly, homodimer. Requires Zn(2+) as cofactor.

It is found in the cytoplasm. The catalysed reaction is tRNA(Met) + L-methionine + ATP = L-methionyl-tRNA(Met) + AMP + diphosphate. Functionally, is required not only for elongation of protein synthesis but also for the initiation of all mRNA translation through initiator tRNA(fMet) aminoacylation. This chain is Methionine--tRNA ligase, found in Acinetobacter baylyi (strain ATCC 33305 / BD413 / ADP1).